Consider the following 129-residue polypeptide: Small ribosomal subunit protein uS11 (129 aa).

This sequence belongs to the universal ribosomal protein uS11 family. As to quaternary structure, part of the 30S ribosomal subunit. Interacts with proteins S7 and S18. Binds to IF-3.

Functionally, located on the platform of the 30S subunit, it bridges several disparate RNA helices of the 16S rRNA. Forms part of the Shine-Dalgarno cleft in the 70S ribosome. This chain is Small ribosomal subunit protein uS11, found in Francisella tularensis subsp. tularensis (strain FSC 198).